A 118-amino-acid polypeptide reads, in one-letter code: Large ribosomal subunit protein bL20 (118 aa).

Belongs to the bacterial ribosomal protein bL20 family.

In terms of biological role, binds directly to 23S ribosomal RNA and is necessary for the in vitro assembly process of the 50S ribosomal subunit. It is not involved in the protein synthesizing functions of that subunit. In Francisella philomiragia subsp. philomiragia (strain ATCC 25017 / CCUG 19701 / FSC 153 / O#319-036), this protein is Large ribosomal subunit protein bL20.